The sequence spans 350 residues: Protein-arginine kinase (350 aa).

The region spanning 21–253 (IVISSRIRLA…VRLADQEREA (233 aa)) is the Phosphagen kinase C-terminal domain. Residues 24-28 (SSRIR), His90, Arg124, 175-179 (RASTM), and 206-211 (RGLYGE) contribute to the ATP site. Residues 336 to 341 (RDVHRA) carry the RDXXRA motif of the pArg binding pocket involved in allosteric regulation motif.

This sequence belongs to the ATP:guanido phosphotransferase family.

It catalyses the reaction L-arginyl-[protein] + ATP = N(omega)-phospho-L-arginyl-[protein] + ADP + H(+). Its activity is regulated as follows. Appears to be allosterically activated by the binding of pArg-containing polypeptides to the pArg-binding pocket localized in the C-terminal domain of McsB. Functionally, catalyzes the specific phosphorylation of arginine residues in proteins. This chain is Protein-arginine kinase, found in Moorella thermoacetica (strain ATCC 39073 / JCM 9320).